Reading from the N-terminus, the 391-residue chain is tRNA (cytosine(38)-C(5))-methyltransferase (391 aa).

An SAM-dependent MTase C5-type domain is found at L4–D391. S-adenosyl-L-methionine is bound by residues I13–G15, D34, I57–E58, and S76. C79 is a catalytic residue. S376 is a binding site for S-adenosyl-L-methionine.

It belongs to the class I-like SAM-binding methyltransferase superfamily. C5-methyltransferase family.

The protein resides in the cytoplasm. It catalyses the reaction cytidine(38) in tRNA + S-adenosyl-L-methionine = 5-methylcytidine(38) in tRNA + S-adenosyl-L-homocysteine + H(+). Specifically methylates cytosine 38 in the anticodon loop of tRNA(Asp). Has higher activity on tRNA(Asp) modified with queuosine at position 34. The sequence is that of tRNA (cytosine(38)-C(5))-methyltransferase (TRDMT1) from Bos taurus (Bovine).